The following is a 184-amino-acid chain: ATP-dependent protease subunit HslV (184 aa).

Threonine 12 is an active-site residue. Residues alanine 166, cysteine 169, and threonine 172 each contribute to the Na(+) site.

Belongs to the peptidase T1B family. HslV subfamily. As to quaternary structure, a double ring-shaped homohexamer of HslV is capped on each side by a ring-shaped HslU homohexamer. The assembly of the HslU/HslV complex is dependent on binding of ATP.

It is found in the cytoplasm. It carries out the reaction ATP-dependent cleavage of peptide bonds with broad specificity.. Its activity is regulated as follows. Allosterically activated by HslU binding. Protease subunit of a proteasome-like degradation complex believed to be a general protein degrading machinery. The polypeptide is ATP-dependent protease subunit HslV (Brucella anthropi (strain ATCC 49188 / DSM 6882 / CCUG 24695 / JCM 21032 / LMG 3331 / NBRC 15819 / NCTC 12168 / Alc 37) (Ochrobactrum anthropi)).